A 737-amino-acid chain; its full sequence is Acetylcholinesterase (737 aa).

The N-terminal stretch at 1–38 (MEIRGLLMGRLRLGRRMVPLGLLGVTALLLILPPFALV) is a signal peptide. A disordered region spans residues 141 to 168 (HSGATPRRRGLTRRESNSDANDNDPLVV). A glycan (N-linked (GlcNAc...) asparagine) is linked at N220. C228 and C255 form a disulfide bridge. Residue S360 is the Acyl-ester intermediate of the active site. Cysteines 414 and 427 form a disulfide. Catalysis depends on charge relay system residues E486 and H600. C562 and C683 are joined by a disulfide. The N-linked (GlcNAc...) asparagine glycan is linked to N670.

Belongs to the type-B carboxylesterase/lipase family.

It is found in the synapse. The catalysed reaction is acetylcholine + H2O = choline + acetate + H(+). Rapidly hydrolyzes choline released into the synapse. The chain is Acetylcholinesterase (Ace) from Anopheles gambiae (African malaria mosquito).